Consider the following 622-residue polypeptide: Low affinity potassium transport system protein Kup (622 aa).

Helical transmembrane passes span 9-29 (LPALTLAAIGVVYGDIGTSPL), 49-69 (VFGFLSLIFWLLIFTVSIKYI), 101-121 (VLVILGLIGGSFFYGEVVITP), 137-157 (PQLDTWIVPISIIVLTLLFVI), 163-183 (GMVGKLFAPIMLIWFLLLAVL), 213-233 (VSFIALGAVVLSITGVEALYA), 247-267 (WFSVVLPSLVLNYFGQGALLL), 276-296 (PFFLLAPEWALIPMLIIATLA), 337-357 (IYIPFINWLLYVSVVIVIVSF), 363-383 (LAAAYGIAVTGTMVLTSILSA), 395-415 (LFVGLMLVAFLCIDIPLFSAN), and 419-439 (IVSGGWLPLSLGMVMFTVMTT).

This sequence belongs to the HAK/KUP transporter (TC 2.A.72) family.

The protein localises to the cell inner membrane. The catalysed reaction is K(+)(in) + H(+)(in) = K(+)(out) + H(+)(out). Its function is as follows. Responsible for the low-affinity transport of potassium into the cell. Likely operates as a K(+):H(+) symporter. This Klebsiella pneumoniae subsp. pneumoniae (strain ATCC 700721 / MGH 78578) protein is Low affinity potassium transport system protein Kup.